We begin with the raw amino-acid sequence, 838 residues long: Sec1 family domain-containing protein MIP3 (838 aa).

The tract at residues 637 to 677 (KSEETKEIPSDDQLDIDALDDDPWGKWGDEEEEEVDNSKAD) is disordered. Over residues 646-658 (SDDQLDIDALDDD) the composition is skewed to acidic residues.

This sequence belongs to the STXBP/unc-18/SEC1 family. In terms of assembly, forms a complex with MAG2, ZW10/MIP1 and MIP2 on the endoplasmic reticulum.

Its subcellular location is the endoplasmic reticulum membrane. Required for proper maturation of seed storage proteins. Forms a complex with MAG2, ZW10/MIP1 and MIP2 on the endoplasmic reticulum that may be responsible for efficient transport of seed storage proteins. This Arabidopsis thaliana (Mouse-ear cress) protein is Sec1 family domain-containing protein MIP3.